The sequence spans 298 residues: Bifunctional protein FolD (298 aa).

Residues glycine 166 to serine 168, serine 191, and isoleucine 232 contribute to the NADP(+) site.

Belongs to the tetrahydrofolate dehydrogenase/cyclohydrolase family. Homodimer.

It carries out the reaction (6R)-5,10-methylene-5,6,7,8-tetrahydrofolate + NADP(+) = (6R)-5,10-methenyltetrahydrofolate + NADPH. It catalyses the reaction (6R)-5,10-methenyltetrahydrofolate + H2O = (6R)-10-formyltetrahydrofolate + H(+). Its pathway is one-carbon metabolism; tetrahydrofolate interconversion. Functionally, catalyzes the oxidation of 5,10-methylenetetrahydrofolate to 5,10-methenyltetrahydrofolate and then the hydrolysis of 5,10-methenyltetrahydrofolate to 10-formyltetrahydrofolate. The protein is Bifunctional protein FolD of Erythrobacter litoralis (strain HTCC2594).